A 502-amino-acid polypeptide reads, in one-letter code: GTPase Obg (502 aa).

The Obg domain occupies 2 to 159; sequence NRFIDRVVLH…HDLILELKSM (158 aa). The OBG-type G domain occupies 160 to 341; the sequence is ADVGLVGFPS…LKYKLLEIVQ (182 aa). GTP contacts are provided by residues 166–173, 191–195, 212–215, 292–295, and 322–324; these read GFPSAGKS, FTTLQ, DVPG, NKAD, and SAV. Mg(2+) contacts are provided by Ser173 and Thr193. Residues 364 to 444 form the OCT domain; sequence DGRRRREEFE…IGGVTFEWEP (81 aa).

This sequence belongs to the TRAFAC class OBG-HflX-like GTPase superfamily. OBG GTPase family. In terms of assembly, monomer. Requires Mg(2+) as cofactor.

The protein localises to the cytoplasm. An essential GTPase which binds GTP, GDP and possibly (p)ppGpp with moderate affinity, with high nucleotide exchange rates and a fairly low GTP hydrolysis rate. Plays a role in control of the cell cycle, stress response, ribosome biogenesis and in those bacteria that undergo differentiation, in morphogenesis control. In Corynebacterium efficiens (strain DSM 44549 / YS-314 / AJ 12310 / JCM 11189 / NBRC 100395), this protein is GTPase Obg.